We begin with the raw amino-acid sequence, 159 residues long: Ankyrin repeat domain-containing protein 37 (159 aa).

ANK repeat units follow at residues 1–25, 30–59, and 63–92; these read MLLL…SVNA, QEQS…DLNQ, and LGET…QIGV. The Nuclear localization signal signature appears at 130 to 150; the sequence is EQQERDPRAPVLRQKRSFRTV.

Ubiquitinated by the CRL2(FEM1B) complex, leading to its degradation. As to expression, expressed testis, ovary, uterus, kidney, liver, but not in other tissues.

It localises to the nucleus. It is found in the cytoplasm. The sequence is that of Ankyrin repeat domain-containing protein 37 from Mus musculus (Mouse).